The primary structure comprises 490 residues: GTPase Der (490 aa).

EngA-type G domains are found at residues 3 to 166 (PVVA…VDEI) and 203 to 376 (IKLA…DSST). Residues 9–16 (GRPNVGKS), 56–60 (DTGGI), 118–121 (NKTD), 209–216 (GRPNVGKS), 256–260 (DTAGV), and 321–324 (NKWD) each bind GTP. Residues 377-461 (RRQSTAMLTR…PIRIQFKEGE (85 aa)) form the KH-like domain.

Belongs to the TRAFAC class TrmE-Era-EngA-EngB-Septin-like GTPase superfamily. EngA (Der) GTPase family. In terms of assembly, associates with the 50S ribosomal subunit.

In terms of biological role, GTPase that plays an essential role in the late steps of ribosome biogenesis. The protein is GTPase Der of Enterobacter sp. (strain 638).